Consider the following 238-residue polypeptide: Uroporphyrinogen-III C-methyltransferase (238 aa).

S-adenosyl-L-homocysteine is bound by residues proline 11, 87–89, 117–118, and methionine 170; these read GGD and TS.

The protein belongs to the precorrin methyltransferase family. As to quaternary structure, monomer.

The enzyme catalyses uroporphyrinogen III + 2 S-adenosyl-L-methionine = precorrin-2 + 2 S-adenosyl-L-homocysteine + H(+). The protein operates within cofactor biosynthesis; adenosylcobalamin biosynthesis; precorrin-2 from uroporphyrinogen III: step 1/1. It functions in the pathway porphyrin-containing compound metabolism; siroheme biosynthesis; precorrin-2 from uroporphyrinogen III: step 1/1. SUMT exhibits a substrate inhibition phenomenon at uroporphyrinogen III concentrations above 0.5 uM; this property might play a regulatory role in cobalamin biosynthesis. In terms of biological role, catalyzes the two successive C-2 and C-7 methylation reactions involved in the conversion of uroporphyrinogen III to precorrin-2 via the intermediate formation of precorrin-1. It is a step in the biosynthesis of both cobalamin (vitamin B12) and siroheme. This chain is Uroporphyrinogen-III C-methyltransferase, found in Priestia megaterium (Bacillus megaterium).